The following is a 494-amino-acid chain: 3-octaprenyl-4-hydroxybenzoate carboxy-lyase (494 aa).

N172 contacts Mn(2+). Prenylated FMN contacts are provided by residues 175-177, 189-191, and 194-195; these read IYR, RWL, and RG. E238 is a Mn(2+) binding site. D294 acts as the Proton donor in catalysis.

This sequence belongs to the UbiD family. Homohexamer. Prenylated FMN serves as cofactor. It depends on Mn(2+) as a cofactor.

It is found in the cell membrane. It carries out the reaction a 4-hydroxy-3-(all-trans-polyprenyl)benzoate + H(+) = a 2-(all-trans-polyprenyl)phenol + CO2. The protein operates within cofactor biosynthesis; ubiquinone biosynthesis. Catalyzes the decarboxylation of 3-octaprenyl-4-hydroxy benzoate to 2-octaprenylphenol, an intermediate step in ubiquinone biosynthesis. The protein is 3-octaprenyl-4-hydroxybenzoate carboxy-lyase of Herminiimonas arsenicoxydans.